Consider the following 120-residue polypeptide: Transcription elongation factor SPT4 (120 aa).

The segment at 1–39 (MSASVPADLRNLRACLLCSLVKSVESFQKEGCENCEDVL) is interaction with spt-5. The C4-type zinc finger occupies 15–35 (CLLCSLVKSVESFQKEGCENC).

It belongs to the SPT4 family. In terms of assembly, interacts with spt-5 to form DSIF. DSIF interacts with RNA polymerase II and with the positive transcription elongation factor b complex (P-TEFb complex), which is composed of cdk-9 and cyclin-T (cit-1.1 or cit-1.2).

The protein localises to the nucleus. Its function is as follows. May function as a component of the DRB sensitivity-inducing factor complex (DSIF complex), which regulates transcription elongation by RNA polymerase II. DSIF may enhance transcriptional pausing at sites proximal to the promoter, which may in turn facilitate the assembly of an elongation competent RNA polymerase II complex. This is Transcription elongation factor SPT4 (spt-4) from Caenorhabditis elegans.